Here is a 294-residue protein sequence, read N- to C-terminus: 4-hydroxy-tetrahydrodipicolinate synthase (294 aa).

Residue T47 participates in pyruvate binding. The Proton donor/acceptor role is filled by Y136. The active-site Schiff-base intermediate with substrate is K164. V206 is a binding site for pyruvate.

It belongs to the DapA family. As to quaternary structure, homotetramer; dimer of dimers.

Its subcellular location is the cytoplasm. The catalysed reaction is L-aspartate 4-semialdehyde + pyruvate = (2S,4S)-4-hydroxy-2,3,4,5-tetrahydrodipicolinate + H2O + H(+). The protein operates within amino-acid biosynthesis; L-lysine biosynthesis via DAP pathway; (S)-tetrahydrodipicolinate from L-aspartate: step 3/4. Functionally, catalyzes the condensation of (S)-aspartate-beta-semialdehyde [(S)-ASA] and pyruvate to 4-hydroxy-tetrahydrodipicolinate (HTPA). This chain is 4-hydroxy-tetrahydrodipicolinate synthase, found in Nostoc sp. (strain PCC 7120 / SAG 25.82 / UTEX 2576).